The primary structure comprises 396 residues: Putative N(4)-(beta-N-acetylglucosaminyl)-L-asparaginase GG24090 (396 aa).

The signal sequence occupies residues 1–23 (MKRHLGTCLWVLCLASTAFSSLA). Intrachain disulfides connect Cys100–Cys105 and Cys199–Cys215. Thr246 acts as the Nucleophile in catalysis. Substrate-binding positions include 274 to 277 (RVGD) and 297 to 300 (TGDG). The cysteines at positions 357 and 384 are disulfide-linked.

Belongs to the Ntn-hydrolase family. In terms of assembly, heterotetramer of two alpha and two beta chains arranged as a dimer of alpha/beta heterodimers. Post-translationally, cleaved into an alpha and beta chain by autocatalysis; this activates the enzyme. The N-terminal residue of the beta subunit is responsible for the nucleophile hydrolase activity.

The enzyme catalyses N(4)-(beta-N-acetyl-D-glucosaminyl)-L-asparagine + H2O = N-acetyl-beta-D-glucosaminylamine + L-aspartate + H(+). In terms of biological role, cleaves the GlcNAc-Asn bond which joins oligosaccharides to the peptide of asparagine-linked glycoproteins. The polypeptide is Putative N(4)-(beta-N-acetylglucosaminyl)-L-asparaginase GG24090 (Drosophila erecta (Fruit fly)).